The primary structure comprises 333 residues: MSVLKRYDLEKLAVATVASHTALQILRGAKKYGFRTIAIAGRADVAEFYQQFNFIDEVWTVDFRNFVKAAEKLVEANAVFIPHGSYVEYVGWRQALEAPVPTLGCRELIKWEADQYKKMELLQRGGIPTSRVYKTPEEVDRPVIVKLFGAKGGRGYFLARDREELRRRLAGLSDYIIQEYVFGVPAYYHYFSSPVYGRVEVFGADIRYESNVDGRTFGWVEPTFVVVGNLPLVLRESLLPTIWKYGVQFAKAVEEVVGCRLAGPYCLESIIRDDMSISVFEFSGRIVAGTNIYMGYGSPYSVLYFDRPMDMGERIAHEIREAARRGRLEDLFT.

H20 and S85 together coordinate 5-amino-1-(5-phospho-beta-D-ribosyl)imidazole-4-carboxamide. Residues R106–E313 enclose the ATP-grasp domain. ATP contacts are provided by residues P136 to Y187 and E209. Residue N229 coordinates 5-amino-1-(5-phospho-beta-D-ribosyl)imidazole-4-carboxamide. Mg(2+)-binding residues include E268 and E281.

This sequence belongs to the phosphohexose mutase family. Requires Mg(2+) as cofactor. It depends on Mn(2+) as a cofactor.

The enzyme catalyses 5-amino-1-(5-phospho-beta-D-ribosyl)imidazole-4-carboxamide + formate + ATP = 5-formamido-1-(5-phospho-D-ribosyl)imidazole-4-carboxamide + ADP + phosphate. It participates in purine metabolism; IMP biosynthesis via de novo pathway; 5-formamido-1-(5-phospho-D-ribosyl)imidazole-4-carboxamide from 5-amino-1-(5-phospho-D-ribosyl)imidazole-4-carboxamide (formate route): step 1/1. Catalyzes the ATP- and formate-dependent formylation of 5-aminoimidazole-4-carboxamide-1-beta-d-ribofuranosyl 5'-monophosphate (AICAR) to 5-formaminoimidazole-4-carboxamide-1-beta-d-ribofuranosyl 5'-monophosphate (FAICAR) in the absence of folates. In Pyrobaculum islandicum (strain DSM 4184 / JCM 9189 / GEO3), this protein is 5-formaminoimidazole-4-carboxamide-1-(beta)-D-ribofuranosyl 5'-monophosphate synthetase.